A 394-amino-acid polypeptide reads, in one-letter code: 8-amino-7-oxononanoate synthase (394 aa).

R21 is a binding site for substrate. 112-113 contributes to the pyridoxal 5'-phosphate binding site; it reads GY. H137 lines the substrate pocket. Pyridoxal 5'-phosphate is bound by residues S183, H211, and T239. K242 bears the N6-(pyridoxal phosphate)lysine mark. A substrate-binding site is contributed by T358.

The protein belongs to the class-II pyridoxal-phosphate-dependent aminotransferase family. BioF subfamily. As to quaternary structure, homodimer. Requires pyridoxal 5'-phosphate as cofactor.

The enzyme catalyses 6-carboxyhexanoyl-[ACP] + L-alanine + H(+) = (8S)-8-amino-7-oxononanoate + holo-[ACP] + CO2. The protein operates within cofactor biosynthesis; biotin biosynthesis. In terms of biological role, catalyzes the decarboxylative condensation of pimeloyl-[acyl-carrier protein] and L-alanine to produce 8-amino-7-oxononanoate (AON), [acyl-carrier protein], and carbon dioxide. The polypeptide is 8-amino-7-oxononanoate synthase (Burkholderia thailandensis (strain ATCC 700388 / DSM 13276 / CCUG 48851 / CIP 106301 / E264)).